The following is a 547-amino-acid chain: Chaperonin GroEL (547 aa).

ATP is bound by residues 30–33 (TLGP), Lys-51, 87–91 (DGTTT), Gly-415, 479–481 (NAA), and Asp-495.

It belongs to the chaperonin (HSP60) family. As to quaternary structure, forms a cylinder of 14 subunits composed of two heptameric rings stacked back-to-back. Interacts with the co-chaperonin GroES.

The protein resides in the cytoplasm. The catalysed reaction is ATP + H2O + a folded polypeptide = ADP + phosphate + an unfolded polypeptide.. In terms of biological role, together with its co-chaperonin GroES, plays an essential role in assisting protein folding. The GroEL-GroES system forms a nano-cage that allows encapsulation of the non-native substrate proteins and provides a physical environment optimized to promote and accelerate protein folding. In Marinomonas sp. (strain MWYL1), this protein is Chaperonin GroEL.